The primary structure comprises 253 residues: Indole-3-glycerol phosphate synthase (253 aa).

This sequence belongs to the TrpC family.

It carries out the reaction 1-(2-carboxyphenylamino)-1-deoxy-D-ribulose 5-phosphate + H(+) = (1S,2R)-1-C-(indol-3-yl)glycerol 3-phosphate + CO2 + H2O. Its pathway is amino-acid biosynthesis; L-tryptophan biosynthesis; L-tryptophan from chorismate: step 4/5. This Bacillus thuringiensis (strain Al Hakam) protein is Indole-3-glycerol phosphate synthase.